The primary structure comprises 71 residues: Mitotic-spindle organizing protein 1 (71 aa).

The protein belongs to the MOZART1 family. Part of the gamma-tubulin complex.

The protein localises to the cytoplasm. It localises to the cytoskeleton. The protein resides in the microtubule organizing center. It is found in the spindle pole body. In terms of biological role, required for gamma-tubulin complex recruitment to the microtubule organizing center (MTOC). This chain is Mitotic-spindle organizing protein 1, found in Aspergillus clavatus (strain ATCC 1007 / CBS 513.65 / DSM 816 / NCTC 3887 / NRRL 1 / QM 1276 / 107).